An 85-amino-acid polypeptide reads, in one-letter code: Putative membrane protein insertion efficiency factor (85 aa).

Belongs to the UPF0161 family.

Its subcellular location is the cell inner membrane. Could be involved in insertion of integral membrane proteins into the membrane. This Escherichia coli O157:H7 protein is Putative membrane protein insertion efficiency factor.